Here is a 90-residue protein sequence, read N- to C-terminus: Co-chaperonin GroES (90 aa).

Belongs to the GroES chaperonin family. Heptamer of 7 subunits arranged in a ring. Interacts with the chaperonin GroEL.

It localises to the cytoplasm. Functionally, together with the chaperonin GroEL, plays an essential role in assisting protein folding. The GroEL-GroES system forms a nano-cage that allows encapsulation of the non-native substrate proteins and provides a physical environment optimized to promote and accelerate protein folding. GroES binds to the apical surface of the GroEL ring, thereby capping the opening of the GroEL channel. The polypeptide is Co-chaperonin GroES (Fusobacterium nucleatum subsp. nucleatum (strain ATCC 25586 / DSM 15643 / BCRC 10681 / CIP 101130 / JCM 8532 / KCTC 2640 / LMG 13131 / VPI 4355)).